Reading from the N-terminus, the 391-residue chain is Casein kinase II subunit alpha 3 (391 aa).

The 286-residue stretch at 39–324 (YQLVRKLGRG…AREAMEHPYF (286 aa)) folds into the Protein kinase domain. ATP-binding positions include 45 to 53 (LGRGKYSEV) and Lys-68. The active-site Proton acceptor is Asp-156.

It belongs to the protein kinase superfamily. Ser/Thr protein kinase family. CK2 subfamily. In terms of assembly, heterotetramer composed of two catalytic subunits (alpha chain and/or alpha' chain) and two regulatory subunits (beta chains). Interacts with PML. Detected in blood platelets and megakaryocyte cell lines. Poorly expressed in lung. Highly expressed in lung tumor tissues.

It catalyses the reaction L-seryl-[protein] + ATP = O-phospho-L-seryl-[protein] + ADP + H(+). The enzyme catalyses L-threonyl-[protein] + ATP = O-phospho-L-threonyl-[protein] + ADP + H(+). Functionally, probable catalytic subunit of a constitutively active serine/threonine-protein kinase complex that phosphorylates a large number of substrates containing acidic residues C-terminal to the phosphorylated serine or threonine. Amplification-dependent oncogene; promotes cell proliferation and tumorigenesis by down-regulating expression of the tumor suppressor protein, PML. May play a role in the pathogenesis of the lung cancer development and progression. In Homo sapiens (Human), this protein is Casein kinase II subunit alpha 3 (CSNK2A3).